The following is an 88-amino-acid chain: UPF0250 protein Sfri_0694 (88 aa).

It belongs to the UPF0250 family.

This Shewanella frigidimarina (strain NCIMB 400) protein is UPF0250 protein Sfri_0694.